Reading from the N-terminus, the 78-residue chain is Small ribosomal subunit protein bS16c (78 aa).

This sequence belongs to the bacterial ribosomal protein bS16 family.

The protein resides in the plastid. The protein localises to the chloroplast. The sequence is that of Small ribosomal subunit protein bS16c from Chara vulgaris (Common stonewort).